The sequence spans 873 residues: Coatomer subunit gamma-2 (873 aa).

A compositionally biased stretch (basic and acidic residues) spans methionine 1–glutamate 11. The disordered stretch occupies residues methionine 1–asparagine 21. HEAT repeat units lie at residues threonine 64–aspartate 101, arginine 283–serine 320, alanine 321–serine 355, serine 356–arginine 392, histidine 394–glutamate 430, and proline 467–aspartate 504.

Belongs to the COPG family. In terms of assembly, oligomeric complex.

Its subcellular location is the cytoplasm. The protein localises to the golgi apparatus membrane. The protein resides in the cytoplasmic vesicle. It localises to the COPI-coated vesicle membrane. Functionally, the coatomer is a cytosolic protein complex that binds to dilysine motifs and reversibly associates with Golgi non-clathrin-coated vesicles, which further mediate biosynthetic protein transport from the ER, via the Golgi up to the trans Golgi network. Coatomer complex is required for budding from Golgi membranes, and is essential for the retrograde Golgi-to-ER transport of dilysine-tagged proteins. This chain is Coatomer subunit gamma-2 (copg2), found in Takifugu rubripes (Japanese pufferfish).